Reading from the N-terminus, the 141-residue chain is Large ribosomal subunit protein uL11 (141 aa).

The protein belongs to the universal ribosomal protein uL11 family. Part of the ribosomal stalk of the 50S ribosomal subunit. Interacts with L10 and the large rRNA to form the base of the stalk. L10 forms an elongated spine to which L12 dimers bind in a sequential fashion forming a multimeric L10(L12)X complex. In terms of processing, one or more lysine residues are methylated.

Functionally, forms part of the ribosomal stalk which helps the ribosome interact with GTP-bound translation factors. The polypeptide is Large ribosomal subunit protein uL11 (Prochlorococcus marinus (strain MIT 9215)).